We begin with the raw amino-acid sequence, 257 residues long: Acetylglutamate kinase (257 aa).

Residues 41–42 (GG), R63, and N156 contribute to the substrate site.

The protein belongs to the acetylglutamate kinase family. ArgB subfamily.

The protein resides in the cytoplasm. It catalyses the reaction N-acetyl-L-glutamate + ATP = N-acetyl-L-glutamyl 5-phosphate + ADP. Its pathway is amino-acid biosynthesis; L-arginine biosynthesis; N(2)-acetyl-L-ornithine from L-glutamate: step 2/4. Functionally, catalyzes the ATP-dependent phosphorylation of N-acetyl-L-glutamate. This Geobacillus sp. (strain WCH70) protein is Acetylglutamate kinase.